A 192-amino-acid chain; its full sequence is Ion-translocating oxidoreductase complex subunit A (192 aa).

6 helical membrane passes run 5–25 (ILLLIGTVLVNNFVLVKFLGL), 39–59 (IGMGLATTFVLTMASVCAYLV), 72–92 (LRTMSFILVIAVVVQFTEMVV), 102–122 (LLGIFLPLITTNCAVLGVALL), 134–154 (IIYGFGAAVGFSLVLILFASM), and 171–191 (SIAMITAGLMSLAFMGFTGLV).

Belongs to the NqrDE/RnfAE family. In terms of assembly, the complex is composed of six subunits: RnfA, RnfB, RnfC, RnfD, RnfE and RnfG.

The protein resides in the cell inner membrane. Its function is as follows. Part of a membrane-bound complex that couples electron transfer with translocation of ions across the membrane. This is Ion-translocating oxidoreductase complex subunit A from Vibrio vulnificus (strain CMCP6).